The sequence spans 351 residues: N-acetyl-gamma-glutamyl-phosphate reductase (351 aa).

The active site involves C154.

It belongs to the NAGSA dehydrogenase family. Type 1 subfamily.

It localises to the cytoplasm. It catalyses the reaction N-acetyl-L-glutamate 5-semialdehyde + phosphate + NADP(+) = N-acetyl-L-glutamyl 5-phosphate + NADPH + H(+). It functions in the pathway amino-acid biosynthesis; L-arginine biosynthesis; N(2)-acetyl-L-ornithine from L-glutamate: step 3/4. Its function is as follows. Catalyzes the NADPH-dependent reduction of N-acetyl-5-glutamyl phosphate to yield N-acetyl-L-glutamate 5-semialdehyde. In Prochlorococcus marinus (strain AS9601), this protein is N-acetyl-gamma-glutamyl-phosphate reductase.